The sequence spans 461 residues: Cysteine--tRNA ligase (461 aa).

Cysteine 31 is a Zn(2+) binding site. The 'HIGH' region motif lies at 33-43; sequence PTVYDFAHIGN. Zn(2+) is bound by residues cysteine 219, histidine 244, and glutamate 248. The short motif at 277 to 281 is the 'KMSKS' region element; that stretch reads KMSKS. Lysine 280 lines the ATP pocket. The segment covering 436-452 has biased composition (basic and acidic residues); sequence SEKGIQLKDGKDKETGE. The interval 436–461 is disordered; that stretch reads SEKGIQLKDGKDKETGERTTTWELKR.

Belongs to the class-I aminoacyl-tRNA synthetase family. In terms of assembly, monomer. It depends on Zn(2+) as a cofactor.

The protein localises to the cytoplasm. The catalysed reaction is tRNA(Cys) + L-cysteine + ATP = L-cysteinyl-tRNA(Cys) + AMP + diphosphate. The polypeptide is Cysteine--tRNA ligase (Agrobacterium fabrum (strain C58 / ATCC 33970) (Agrobacterium tumefaciens (strain C58))).